Consider the following 726-residue polypeptide: Catalase-peroxidase (726 aa).

Residues Met-1 to Thr-33 form a disordered region. A cross-link (tryptophyl-tyrosyl-methioninium (Trp-Tyr) (with M-252)) is located at residues Trp-105–Tyr-226. The active-site Proton acceptor is the His-106. Residues Tyr-226–Met-252 constitute a cross-link (tryptophyl-tyrosyl-methioninium (Tyr-Met) (with W-105)). A heme b-binding site is contributed by His-267.

Belongs to the peroxidase family. Peroxidase/catalase subfamily. As to quaternary structure, homodimer or homotetramer. It depends on heme b as a cofactor. In terms of processing, formation of the three residue Trp-Tyr-Met cross-link is important for the catalase, but not the peroxidase activity of the enzyme.

The catalysed reaction is H2O2 + AH2 = A + 2 H2O. It carries out the reaction 2 H2O2 = O2 + 2 H2O. In terms of biological role, bifunctional enzyme with both catalase and broad-spectrum peroxidase activity. This is Catalase-peroxidase from Escherichia coli (strain UTI89 / UPEC).